Consider the following 99-residue polypeptide: uncharacterized protein (99 aa).

This is an uncharacterized protein from Methanocaldococcus jannaschii (strain ATCC 43067 / DSM 2661 / JAL-1 / JCM 10045 / NBRC 100440) (Methanococcus jannaschii).